Here is a 425-residue protein sequence, read N- to C-terminus: Synaptotagmin-4 (425 aa).

Over 1–16 the chain is Vesicular; that stretch reads MAPITTSRVEFDEIPT. The helical transmembrane segment at 17-37 threads the bilayer; the sequence is VVGIFSAFGLVFTVSLFAWIC. Topologically, residues 38–425 are cytoplasmic; the sequence is CQRRSAKSNK…IAKWHMLCDG (388 aa). The interval 127–147 is disordered; it reads TETEKEANSPESLKSSTSLTS. Residue Ser-135 is modified to Phosphoserine; by MAPK8. Residues 137–146 show a composition bias toward low complexity; the sequence is ESLKSSTSLT. 2 C2 domains span residues 153–274 and 287–420; these read KLGT…MLMT and GRGE…AKWH. Positions 246, 249, and 252 each coordinate Ca(2+).

This sequence belongs to the synaptotagmin family. Interacts with KIF1A; the interaction increases in presence of calcium and decreases when SYT4 is phosphorylated at Ser-135. Ca(2+) serves as cofactor. Post-translationally, phosphorylation at Ser-135 by MAPK8/JNK1 reduces interaction with KIF1A and neuronal dense core vesicles mobility. In terms of tissue distribution, expressed in many regions of the nervous system but is undetectable in extra neural tissues.

It localises to the cytoplasmic vesicle. The protein resides in the secretory vesicle. It is found in the neuronal dense core vesicle membrane. Synaptotagmin family member which does not bind Ca(2+). Plays a role in dendrite formation by melanocytes. Its function is as follows. Synaptotagmin family member which does not bind Ca(2+). Involved in neuronal dense core vesicles (DCVs) mobility through its interaction with KIF1A. Upon increased neuronal activity, phosphorylation by MAPK8/JNK1 destabilizes the interaction with KIF1A and captures DCVs to synapses. Plays a role in dendrite formation by melanocytes. The sequence is that of Synaptotagmin-4 (Syt4) from Mus musculus (Mouse).